The chain runs to 421 residues: Serine--tRNA ligase (421 aa).

229 to 231 serves as a coordination point for L-serine; the sequence is TAE. Residue 260-262 participates in ATP binding; the sequence is RAE. Glu283 contacts L-serine. 347–350 serves as a coordination point for ATP; the sequence is EISS. Ser383 is a binding site for L-serine.

Belongs to the class-II aminoacyl-tRNA synthetase family. Type-1 seryl-tRNA synthetase subfamily. Homodimer. The tRNA molecule binds across the dimer.

It localises to the cytoplasm. The enzyme catalyses tRNA(Ser) + L-serine + ATP = L-seryl-tRNA(Ser) + AMP + diphosphate + H(+). It catalyses the reaction tRNA(Sec) + L-serine + ATP = L-seryl-tRNA(Sec) + AMP + diphosphate + H(+). It participates in aminoacyl-tRNA biosynthesis; selenocysteinyl-tRNA(Sec) biosynthesis; L-seryl-tRNA(Sec) from L-serine and tRNA(Sec): step 1/1. In terms of biological role, catalyzes the attachment of serine to tRNA(Ser). Is also able to aminoacylate tRNA(Sec) with serine, to form the misacylated tRNA L-seryl-tRNA(Sec), which will be further converted into selenocysteinyl-tRNA(Sec). This is Serine--tRNA ligase from Desulfitobacterium hafniense (strain Y51).